We begin with the raw amino-acid sequence, 391 residues long: Formate-dependent phosphoribosylglycinamide formyltransferase (391 aa).

N(1)-(5-phospho-beta-D-ribosyl)glycinamide contacts are provided by residues 18–19 and Glu78; that span reads EL. ATP-binding positions include Arg110, Lys151, 156–161, 191–194, and Glu199; these read SSGKGQ and EEFI. In terms of domain architecture, ATP-grasp spans 115-305; that stretch reads DLASKDLKIK…EFELHLRAFL (191 aa). The Mg(2+) site is built by Glu264 and Glu276. N(1)-(5-phospho-beta-D-ribosyl)glycinamide contacts are provided by residues Asp283, Lys353, and 360–361; that span reads RR.

Belongs to the PurK/PurT family. In terms of assembly, homodimer.

The enzyme catalyses N(1)-(5-phospho-beta-D-ribosyl)glycinamide + formate + ATP = N(2)-formyl-N(1)-(5-phospho-beta-D-ribosyl)glycinamide + ADP + phosphate + H(+). The protein operates within purine metabolism; IMP biosynthesis via de novo pathway; N(2)-formyl-N(1)-(5-phospho-D-ribosyl)glycinamide from N(1)-(5-phospho-D-ribosyl)glycinamide (formate route): step 1/1. Functionally, involved in the de novo purine biosynthesis. Catalyzes the transfer of formate to 5-phospho-ribosyl-glycinamide (GAR), producing 5-phospho-ribosyl-N-formylglycinamide (FGAR). Formate is provided by PurU via hydrolysis of 10-formyl-tetrahydrofolate. This is Formate-dependent phosphoribosylglycinamide formyltransferase from Prochlorococcus marinus (strain MIT 9301).